A 92-amino-acid polypeptide reads, in one-letter code: Large ribosomal subunit protein eL43 (92 aa).

Zn(2+) contacts are provided by cysteine 39, cysteine 42, cysteine 57, and cysteine 60. The segment at 39 to 60 (CSFCGKTKMKRRAVGIWHCGSC) adopts a C4-type zinc-finger fold.

It belongs to the eukaryotic ribosomal protein eL43 family. In terms of assembly, component of the large ribosomal subunit.

It is found in the cytoplasm. Functionally, component of the large ribosomal subunit. The ribosome is a large ribonucleoprotein complex responsible for the synthesis of proteins in the cell. The chain is Large ribosomal subunit protein eL43 (rpl37a) from Ictalurus punctatus (Channel catfish).